An 83-amino-acid polypeptide reads, in one-letter code: MSSGGLLLLLGLLTLCAELTPVSSKDRPKFCNVPPEPGRCNANVRAFYYNPRLRKCIEFTYGGCGGNANNFKSRGECKRTCAE.

The first 24 residues, Met1–Ser24, serve as a signal peptide directing secretion. The 51-residue stretch at Cys31–Cys81 folds into the BPTI/Kunitz inhibitor domain. Intrachain disulfides connect Cys31-Cys81, Cys40-Cys64, and Cys56-Cys77.

It belongs to the venom Kunitz-type family. Expressed by the venom gland.

It localises to the secreted. In terms of biological role, serine protease inhibitor. This Bungarus candidus (Malayan krait) protein is Kunitz-type serine protease inhibitor A.